Consider the following 59-residue polypeptide: MLRWAAIFFIIAIVAAVFGFTGIASAAAGIAKFLFILFLVVALIMLILGITAGTKITRH.

The next 2 helical transmembrane spans lie at Trp4 to Ala24 and Phe33 to Gly53.

The protein belongs to the UPF0391 family.

The protein localises to the cell membrane. The sequence is that of UPF0391 membrane protein Geob_0344 from Geotalea daltonii (strain DSM 22248 / JCM 15807 / FRC-32) (Geobacter daltonii).